The sequence spans 139 residues: D-ribose pyranase (139 aa).

The Proton donor role is filled by His20. Substrate contacts are provided by residues Asp28, His106, and 128–130 (YAN).

It belongs to the RbsD / FucU family. RbsD subfamily. Homodecamer.

The protein localises to the cytoplasm. The catalysed reaction is beta-D-ribopyranose = beta-D-ribofuranose. It functions in the pathway carbohydrate metabolism; D-ribose degradation; D-ribose 5-phosphate from beta-D-ribopyranose: step 1/2. Catalyzes the interconversion of beta-pyran and beta-furan forms of D-ribose. The sequence is that of D-ribose pyranase from Salmonella arizonae (strain ATCC BAA-731 / CDC346-86 / RSK2980).